A 77-amino-acid chain; its full sequence is U8-lycotoxin-Ls1m (77 aa).

Positions 1 to 20 (MKLMIFTGLVLFAIVSLIEA) are cleaved as a signal peptide. A propeptide spanning residues 21-26 (QAENEK) is cleaved from the precursor.

Belongs to the neurotoxin 19 (CSTX) family. 08 (U8-Lctx) subfamily. In terms of processing, contains 4 disulfide bonds. In terms of tissue distribution, expressed by the venom gland.

The protein resides in the secreted. This Lycosa singoriensis (Wolf spider) protein is U8-lycotoxin-Ls1m.